Reading from the N-terminus, the 803-residue chain is Elongation factor G, mitochondrial (803 aa).

The N-terminal 24 residues, 1 to 24 (MVRPAQVRAFSGLARSATSTRLIP), are a transit peptide targeting the mitochondrion. Residues 102 to 388 (SKVRNIGIAA…GVCDYLPNPS (287 aa)) form the tr-type G domain. GTP contacts are provided by residues 111 to 118 (AHIDSGKT), 186 to 190 (DTPGH), and 240 to 243 (NKMD).

This sequence belongs to the TRAFAC class translation factor GTPase superfamily. Classic translation factor GTPase family. EF-G/EF-2 subfamily.

It is found in the mitochondrion. The protein operates within protein biosynthesis; polypeptide chain elongation. Functionally, mitochondrial GTPase that catalyzes the GTP-dependent ribosomal translocation step during translation elongation. During this step, the ribosome changes from the pre-translocational (PRE) to the post-translocational (POST) state as the newly formed A-site-bound peptidyl-tRNA and P-site-bound deacylated tRNA move to the P and E sites, respectively. Catalyzes the coordinated movement of the two tRNA molecules, the mRNA and conformational changes in the ribosome. This Talaromyces marneffei (strain ATCC 18224 / CBS 334.59 / QM 7333) (Penicillium marneffei) protein is Elongation factor G, mitochondrial (mef1).